The sequence spans 321 residues: Fe-S cluster assembly protein DRE2 (321 aa).

Positions 1-131 are N-terminal SAM-like domain; that stretch reads MERMLLLSPP…KPDFGPENIV (131 aa). The tract at residues 132–213 is linker; it reads PLKLGKRKPV…EETLLDGEDM (82 aa). The [2Fe-2S] cluster site is built by cysteine 223, cysteine 234, cysteine 237, and cysteine 239. The tract at residues 223 to 239 is fe-S binding site A; that stretch reads CRPKAGKRRRACKDCTC. [4Fe-4S] cluster contacts are provided by cysteine 284, cysteine 287, cysteine 295, and cysteine 298. Short sequence motifs (cx2C motif) lie at residues 284-287 and 295-298; these read CGNC and CDGC. The tract at residues 284–298 is fe-S binding site B; that stretch reads CGNCALGDAFRCDGC.

It belongs to the anamorsin family. As to quaternary structure, monomer. Interacts with TAH18. Interacts with MIA40. The cofactor is [2Fe-2S] cluster. Requires [4Fe-4S] cluster as cofactor.

The protein localises to the cytoplasm. It localises to the mitochondrion intermembrane space. Functionally, component of the cytosolic iron-sulfur (Fe-S) protein assembly (CIA) machinery required for the maturation of extramitochondrial Fe-S proteins. Part of an electron transfer chain functioning in an early step of cytosolic Fe-S biogenesis, facilitating the de novo assembly of a [4Fe-4S] cluster on the scaffold complex CFD1-NBP35. Electrons are transferred to DRE2 from NADPH via the FAD- and FMN-containing protein TAH18. TAH18-DRE2 are also required for the assembly of the diferric tyrosyl radical cofactor of ribonucleotide reductase (RNR), probably by providing electrons for reduction during radical cofactor maturation in the catalytic small subunit RNR2. In Coccidioides immitis (strain RS) (Valley fever fungus), this protein is Fe-S cluster assembly protein DRE2.